We begin with the raw amino-acid sequence, 354 residues long: MTELKNDRYLRALLRQPVDVTPVWMMRQAGRYLPEYKATRAQAGDFMSLCKNAELACEVTLQPLRRYPLDAAILFSDILTVPDAMGLGLYFEAGEGPRFTSPVTCKADVDKLPIPDPEDELGYVMNAVRTIRRELKGEVPLIGFSGSPWTLATYMVEGSSSKAFTVIKKMMYADPQALHALLDKLAKSVTLYLNAQIKAGAQAVMIFDTWGGVLTGRDYQQFSLYYMHKIVDGLLRENDGRRVPVTLFTKGGGQWLEAMAETGCDALGLDWTTDIADARRRVGNKVALQGNMDPSMLYAPPARIEEEVATILAGFGHGEGHVFNLGHGIHQDVPPEHAGVFVEAVHRLSEQYHR.

Residues 27-31 (RQAGR), D77, Y154, T209, and H327 each bind substrate.

It belongs to the uroporphyrinogen decarboxylase family. As to quaternary structure, homodimer.

The protein resides in the cytoplasm. The catalysed reaction is uroporphyrinogen III + 4 H(+) = coproporphyrinogen III + 4 CO2. It participates in porphyrin-containing compound metabolism; protoporphyrin-IX biosynthesis; coproporphyrinogen-III from 5-aminolevulinate: step 4/4. In terms of biological role, catalyzes the decarboxylation of four acetate groups of uroporphyrinogen-III to yield coproporphyrinogen-III. The sequence is that of Uroporphyrinogen decarboxylase from Escherichia fergusonii (strain ATCC 35469 / DSM 13698 / CCUG 18766 / IAM 14443 / JCM 21226 / LMG 7866 / NBRC 102419 / NCTC 12128 / CDC 0568-73).